The following is a 440-amino-acid chain: Chorismate synthase 1, chloroplastic (440 aa).

Residues 1–54 (MASFVPTKQFVGASSSSDIGSSRLVSLQLPSKFSSSNFHLPSRPSQLKRLEIQA) constitute a chloroplast transit peptide. Residues 100–147 (RRRPGQSRITTPRKETDTCKISSGTADGLTTGSPIKVEVPNTDQRGND) form a disordered region. Positions 118 to 132 (CKISSGTADGLTTGS) are enriched in polar residues.

It belongs to the chorismate synthase family. Homotetramer. The cofactor is FMNH2. Predominantly expressed in flowers and roots and, to a lesser extent, in stems, leaves, and cotyledons.

Its subcellular location is the plastid. The protein localises to the chloroplast. It carries out the reaction 5-O-(1-carboxyvinyl)-3-phosphoshikimate = chorismate + phosphate. It functions in the pathway metabolic intermediate biosynthesis; chorismate biosynthesis; chorismate from D-erythrose 4-phosphate and phosphoenolpyruvate: step 7/7. Its function is as follows. Catalyzes the last common step of the biosynthesis of aromatic amino acids, produced via the shikimic acid pathway. In Solanum lycopersicum (Tomato), this protein is Chorismate synthase 1, chloroplastic (CS1).